A 263-amino-acid chain; its full sequence is Interleukin-33 (263 aa).

Residues 1-17 (MKYSTTKIPPAKMNSSA) show a composition bias toward polar residues. Residues 1-28 (MKYSTTKIPPAKMNSSADKALVKSPKLR) form a disordered region. Residues 1-65 (MKYSTTKIPP…CYFRKEITKR (65 aa)) are homeodomain-like HTH domain. An interaction with RELA region spans residues 62 to 103 (ITKRYSPRTAEKCRKQCLVFTACHQQLNKDFTSDVPMLQKCF).

It belongs to the IL-1 family. Highly divergent. In terms of assembly, forms a 1:1:1 heterotrimeric complex with its primary high-affinity receptor IL1RL1 and the coreceptor IL1RAP. Interacts with cargo receptor TMED10; the interaction mediates the translocation from the cytoplasm into the ERGIC (endoplasmic reticulum-Golgi intermediate compartment) and thereby secretion. Post-translationally, the full-length protein can be released from cells and is able to signal via the IL1RL1/ST2 receptor. However, proteolytic processing by CELA1, CSTG/cathepsin G and ELANE/neutrophil elastase produces C-terminal peptides that are more active than the unprocessed full-length protein. May also be proteolytically processed by calpains. Proteolytic cleavage mediated by apoptotic caspases including CASP3 and CASP7 results in IL33 inactivation. In vitro proteolytic cleavage by CASP1 was reported but could not be confirmed in vivo suggesting that IL33 is probably not a direct substrate for that caspase. In terms of tissue distribution, expressed in cultured umbilical artery smooth muscle cells after stimulation with IL1A and IL1B, and to a lesser extent with IFNG. Expressed in vasospastic cerebral arteries after subarachnoid hemorrhage.

It is found in the nucleus. It localises to the chromosome. Its subcellular location is the cytoplasm. The protein resides in the cytoplasmic vesicle. The protein localises to the secretory vesicle. It is found in the secreted. Cytokine that binds to and signals through the IL1RL1/ST2 receptor which in turn activates NF-kappa-B and MAPK signaling pathways in target cells. Involved in the maturation of Th2 cells inducing the secretion of T-helper type 2-associated cytokines. Also involved in activation of mast cells, basophils, eosinophils and natural killer cells. Acts as a chemoattractant for Th2 cells, and may function as an 'alarmin', that amplifies immune responses during tissue injury. Induces rapid UCP2-dependent mitochondrial rewiring that attenuates the generation of reactive oxygen species and preserves the integrity of Krebs cycle required for persistent production of itaconate and subsequent GATA3-dependent differentiation of inflammation-resolving alternatively activated macrophages. Its function is as follows. In quiescent endothelia the uncleaved form is constitutively and abundantly expressed, and acts as a chromatin-associated nuclear factor with transcriptional repressor properties, it may sequester nuclear NF-kappaB/RELA, lowering expression of its targets. This form is rapidely lost upon angiogenic or pro-inflammatory activation. The protein is Interleukin-33 (IL33) of Canis lupus familiaris (Dog).